Consider the following 163-residue polypeptide: HTH-type transcriptional regulator IscR (163 aa).

Positions 2-131 constitute an HTH rrf2-type domain; sequence RLTSKGRYAV…NNITLGELVN (130 aa). Residues 28–51 constitute a DNA-binding region (H-T-H motif); sequence LADISERQGISLSYLEQLFSRLRK. 3 residues coordinate [2Fe-2S] cluster: cysteine 92, cysteine 98, and cysteine 104. Positions 140–149 are enriched in basic and acidic residues; that stretch reads DRQHTHDAPR. The interval 140 to 163 is disordered; sequence DRQHTHDAPRSTRTQDAIDVKLRA.

It depends on [2Fe-2S] cluster as a cofactor.

Functionally, regulates the transcription of several operons and genes involved in the biogenesis of Fe-S clusters and Fe-S-containing proteins. The sequence is that of HTH-type transcriptional regulator IscR from Citrobacter koseri (strain ATCC BAA-895 / CDC 4225-83 / SGSC4696).